The following is a 304-amino-acid chain: Ribosomal protein L11 methyltransferase (304 aa).

S-adenosyl-L-methionine contacts are provided by T147, G168, D190, and N238.

The protein belongs to the methyltransferase superfamily. PrmA family.

The protein resides in the cytoplasm. The catalysed reaction is L-lysyl-[protein] + 3 S-adenosyl-L-methionine = N(6),N(6),N(6)-trimethyl-L-lysyl-[protein] + 3 S-adenosyl-L-homocysteine + 3 H(+). Functionally, methylates ribosomal protein L11. The polypeptide is Ribosomal protein L11 methyltransferase (Prochlorococcus marinus (strain SARG / CCMP1375 / SS120)).